A 72-amino-acid polypeptide reads, in one-letter code: Translation initiation factor IF-1 (72 aa).

The region spanning 1 to 72 (MSKEDVIEVE…SRGRIVYRFK (72 aa)) is the S1-like domain.

It belongs to the IF-1 family. Component of the 30S ribosomal translation pre-initiation complex which assembles on the 30S ribosome in the order IF-2 and IF-3, IF-1 and N-formylmethionyl-tRNA(fMet); mRNA recruitment can occur at any time during PIC assembly.

Its subcellular location is the cytoplasm. Functionally, one of the essential components for the initiation of protein synthesis. Stabilizes the binding of IF-2 and IF-3 on the 30S subunit to which N-formylmethionyl-tRNA(fMet) subsequently binds. Helps modulate mRNA selection, yielding the 30S pre-initiation complex (PIC). Upon addition of the 50S ribosomal subunit IF-1, IF-2 and IF-3 are released leaving the mature 70S translation initiation complex. This Desulfitobacterium hafniense (strain Y51) protein is Translation initiation factor IF-1.